The primary structure comprises 188 residues: Peptidyl-tRNA hydrolase (188 aa).

A tRNA-binding site is contributed by tyrosine 17. The active-site Proton acceptor is histidine 22. TRNA-binding residues include tyrosine 65, asparagine 67, and asparagine 113.

Belongs to the PTH family. As to quaternary structure, monomer.

It is found in the cytoplasm. The enzyme catalyses an N-acyl-L-alpha-aminoacyl-tRNA + H2O = an N-acyl-L-amino acid + a tRNA + H(+). Its function is as follows. Hydrolyzes ribosome-free peptidyl-tRNAs (with 1 or more amino acids incorporated), which drop off the ribosome during protein synthesis, or as a result of ribosome stalling. Functionally, catalyzes the release of premature peptidyl moieties from peptidyl-tRNA molecules trapped in stalled 50S ribosomal subunits, and thus maintains levels of free tRNAs and 50S ribosomes. This chain is Peptidyl-tRNA hydrolase, found in Mycoplasma pneumoniae (strain ATCC 29342 / M129 / Subtype 1) (Mycoplasmoides pneumoniae).